Here is a 436-residue protein sequence, read N- to C-terminus: 3-ketoacyl-CoA thiolase (436 aa).

The Acyl-thioester intermediate role is filled by C99. Catalysis depends on proton acceptor residues H392 and C422.

Belongs to the thiolase-like superfamily. Thiolase family. As to quaternary structure, heterotetramer of two alpha chains (FadJ) and two beta chains (FadI).

It localises to the cytoplasm. It carries out the reaction an acyl-CoA + acetyl-CoA = a 3-oxoacyl-CoA + CoA. The protein operates within lipid metabolism; fatty acid beta-oxidation. Catalyzes the final step of fatty acid oxidation in which acetyl-CoA is released and the CoA ester of a fatty acid two carbons shorter is formed. This is 3-ketoacyl-CoA thiolase from Yersinia enterocolitica serotype O:8 / biotype 1B (strain NCTC 13174 / 8081).